The following is a 444-amino-acid chain: Transmembrane protein with metallophosphoesterase domain (444 aa).

A run of 5 helical transmembrane segments spans residues 7–27 (LSLGAKAALAAGTVFVSMIVS), 43–63 (LFRLQLALFVNSLMLLGSIYI), 87–107 (MVVAAFLALAHSSFFTMIFLV), 114–134 (FSLVAYTCLGAYVIMLCFLCV), and 162–182 (LALRPALAVMVTTVLSVVGLL). A divalent metal cation contacts are provided by Asp-214, His-216, Asp-246, Asn-277, His-382, and His-384.

It belongs to the metallophosphoesterase superfamily. LOC643853 family. The cofactor is a divalent metal cation.

The protein resides in the membrane. This chain is Transmembrane protein with metallophosphoesterase domain (TMPPE), found in Bos taurus (Bovine).